The sequence spans 54 residues: Large ribosomal subunit protein bL33 (54 aa).

It belongs to the bacterial ribosomal protein bL33 family.

The protein is Large ribosomal subunit protein bL33 of Caldicellulosiruptor saccharolyticus (strain ATCC 43494 / DSM 8903 / Tp8T 6331).